A 624-amino-acid chain; its full sequence is (-)-beta-phellandrene synthase 2, chloroplastic (624 aa).

Residues 1 to 47 (MALVSVAPLVSMRRSLFSSPYELKSIDKTIPNLVMCRKRMLGRPSIR) constitute a chloroplast transit peptide. Residues Asp-375, Asp-379, and Asp-527 each contribute to the Mg(2+) site. A DDXXD motif motif is present at residues 375–379 (DDIYD).

This sequence belongs to the terpene synthase family. Tpsd subfamily. It depends on Mg(2+) as a cofactor. Mn(2+) serves as cofactor.

Its subcellular location is the plastid. It localises to the chloroplast. The enzyme catalyses (2E)-geranyl diphosphate = (-)-beta-phellandrene + diphosphate. It participates in terpene metabolism; oleoresin biosynthesis. It functions in the pathway secondary metabolite biosynthesis; terpenoid biosynthesis. Monoterpene synthase (TPS) involved in the biosynthesis of monoterpene natural products included in conifer oleoresin secretions and volatile emissions; these compounds contribute to biotic and abiotic stress defense against herbivores and pathogens. Catalyzes the conversion of (2E)-geranyl diphosphate (GPP) to (-)-beta-phellandrene. This Pinus contorta (Shore pine) protein is (-)-beta-phellandrene synthase 2, chloroplastic.